The sequence spans 306 residues: MGGRKMATDEENVYGLEENAQSRQESTRRLILVGRTGAGKSATGNSILGQRRFFSRLGATSVTRACTTGSRRWDKCHVEVVDTPDIFSSQVSKTDPGCEERGHCYLLSAPGPHALLLVTQLGRFTAQDQQAVRQVRDMFGEDVLKWMVIVFTRKEDLAGGSLHDYVSNTENRALRELVAECGGRVCAFDNRATGREQEAQVEQLLGMVEGLVLEHKGAHYSNEVYELAQVLRWAGPEERLRRVAERVAARVQRRPWGAWLSARLWKWLKSPRSWRLGLALLLGGALLFWVLLHRRWSEAVAEVGPD.

The tract at residues 1–21 is disordered; the sequence is MGGRKMATDEENVYGLEENAQ. At 1–272 the chain is on the cytoplasmic side; it reads MGGRKMATDE…RLWKWLKSPR (272 aa). An AIG1-type G domain is found at 25–229; the sequence is ESTRRLILVG…YSNEVYELAQ (205 aa). Positions 34 to 41 are G1; the sequence is GRTGAGKS. GTP-binding positions include 34-42 and S55; that span reads GRTGAGKSA. The tract at residues 61–65 is G2; it reads SVTRA. A G3 region spans residues 82–85; that stretch reads DTPD. The segment at 152–155 is G4; the sequence is TRKE. GTP is bound by residues 153-155 and N190; that span reads RKE. The interval 189–191 is G5; sequence DNR. The helical; Anchor for type IV membrane protein transmembrane segment at 273 to 292 threads the bilayer; the sequence is SWRLGLALLLGGALLFWVLL. Over 293–306 the chain is Lumenal; that stretch reads HRRWSEAVAEVGPD.

The protein belongs to the TRAFAC class TrmE-Era-EngA-EngB-Septin-like GTPase superfamily. AIG1/Toc34/Toc159-like paraseptin GTPase family. IAN subfamily. In terms of tissue distribution, predominantly expressed in the spleen and to a lesser extent in the lymph nodes. Detected in T-cells.

Its subcellular location is the endoplasmic reticulum membrane. It is found in the golgi apparatus membrane. Its function is as follows. May regulate lymphocyte survival. Required for normal levels of mature T-lymphocytes and mature B-cells. The protein is GTPase IMAP family member 1 (GIMAP1) of Homo sapiens (Human).